Here is a 129-residue protein sequence, read N- to C-terminus: L-ectoine synthase (129 aa).

Belongs to the ectoine synthase family.

The catalysed reaction is (2S)-4-acetamido-2-aminobutanoate = L-ectoine + H2O. Its pathway is amine and polyamine biosynthesis; ectoine biosynthesis; L-ectoine from L-aspartate 4-semialdehyde: step 3/3. In terms of biological role, catalyzes the circularization of gamma-N-acetyl-alpha,gamma-diaminobutyric acid (ADABA) to ectoine (1,4,5,6-tetrahydro-2-methyl-4-pyrimidine carboxylic acid), which is an excellent osmoprotectant. In Marinomonas sp. (strain MWYL1), this protein is L-ectoine synthase.